A 44-amino-acid polypeptide reads, in one-letter code: Large ribosomal subunit protein bL34 (44 aa).

The interval 1–26 is disordered; sequence MQRTLGGTNRKRKRTSGFRARMRTPD. Over residues 9–22 the composition is skewed to basic residues; the sequence is NRKRKRTSGFRARM.

The protein belongs to the bacterial ribosomal protein bL34 family.

The chain is Large ribosomal subunit protein bL34 from Trichormus variabilis (strain ATCC 29413 / PCC 7937) (Anabaena variabilis).